The primary structure comprises 504 residues: 2,3-bisphosphoglycerate-independent phosphoglycerate mutase (504 aa).

Positions 13 and 63 each coordinate Mn(2+). S63 (phosphoserine intermediate) is an active-site residue. Substrate is bound by residues H124, 153–154 (RD), R183, R189, 254–257 (RADR), and K330. Residues D397, H401, D438, H439, and H457 each contribute to the Mn(2+) site.

This sequence belongs to the BPG-independent phosphoglycerate mutase family. Monomer. Mn(2+) serves as cofactor.

It carries out the reaction (2R)-2-phosphoglycerate = (2R)-3-phosphoglycerate. The protein operates within carbohydrate degradation; glycolysis; pyruvate from D-glyceraldehyde 3-phosphate: step 3/5. Functionally, catalyzes the interconversion of 2-phosphoglycerate and 3-phosphoglycerate. The sequence is that of 2,3-bisphosphoglycerate-independent phosphoglycerate mutase from Rhodopseudomonas palustris (strain ATCC BAA-98 / CGA009).